A 163-amino-acid polypeptide reads, in one-letter code: SsrA-binding protein (163 aa).

Residues 138 to 157 (EDRRGAIAERESKREMDRAL) are compositionally biased toward basic and acidic residues. Residues 138–163 (EDRRGAIAERESKREMDRALARGRRR) are disordered.

This sequence belongs to the SmpB family.

The protein localises to the cytoplasm. Its function is as follows. Required for rescue of stalled ribosomes mediated by trans-translation. Binds to transfer-messenger RNA (tmRNA), required for stable association of tmRNA with ribosomes. tmRNA and SmpB together mimic tRNA shape, replacing the anticodon stem-loop with SmpB. tmRNA is encoded by the ssrA gene; the 2 termini fold to resemble tRNA(Ala) and it encodes a 'tag peptide', a short internal open reading frame. During trans-translation Ala-aminoacylated tmRNA acts like a tRNA, entering the A-site of stalled ribosomes, displacing the stalled mRNA. The ribosome then switches to translate the ORF on the tmRNA; the nascent peptide is terminated with the 'tag peptide' encoded by the tmRNA and targeted for degradation. The ribosome is freed to recommence translation, which seems to be the essential function of trans-translation. This Anaeromyxobacter dehalogenans (strain 2CP-1 / ATCC BAA-258) protein is SsrA-binding protein.